An 86-amino-acid polypeptide reads, in one-letter code: U15-lycotoxin-Ls1d (86 aa).

The N-terminal stretch at 1–20 (MNSKIFAVLLLLAFLSCVLS) is a signal peptide. The WAP domain maps to 21 to 66 (DQYCPKSSITACKKMNIRNDCCKDDDCTGGSWCCATPCGNFCKYPT). 5 disulfides stabilise this stretch: Cys24/Cys54, Cys32/Cys58, Cys41/Cys53, Cys42/Cys80, and Cys47/Cys62.

The protein belongs to the venom protein 11 family. 01 (wap-1) subfamily. Post-translationally, contains 5 disulfide bonds. Expressed by the venom gland.

It is found in the secreted. In terms of biological role, has antibacterial activity. This chain is U15-lycotoxin-Ls1d, found in Lycosa singoriensis (Wolf spider).